The sequence spans 120 residues: Large ribosomal subunit protein bL12 (120 aa).

This sequence belongs to the bacterial ribosomal protein bL12 family. Homodimer. Part of the ribosomal stalk of the 50S ribosomal subunit. Forms a multimeric L10(L12)X complex, where L10 forms an elongated spine to which 2 to 4 L12 dimers bind in a sequential fashion. Binds GTP-bound translation factors.

Its function is as follows. Forms part of the ribosomal stalk which helps the ribosome interact with GTP-bound translation factors. Is thus essential for accurate translation. This is Large ribosomal subunit protein bL12 from Lactobacillus helveticus (strain DPC 4571).